Reading from the N-terminus, the 66-residue chain is uncharacterized protein (66 aa).

The tract at residues 1 to 21 (MPGGDRTGPWGQGPRTGRRAG) is disordered.

This is an uncharacterized protein from Archaeoglobus fulgidus (strain ATCC 49558 / DSM 4304 / JCM 9628 / NBRC 100126 / VC-16).